Here is a 714-residue protein sequence, read N- to C-terminus: Testis-expressed protein 13D (714 aa).

Disordered stretches follow at residues 300-419 (GSFP…GCSD) and 431-675 (RRCK…PASF). 2 stretches are compositionally biased toward basic and acidic residues: residues 307–320 (SRSH…ERSQ) and 366–378 (GNRE…EGPK). Residues 379-392 (RARRMHTLVFRRSH) show a composition bias toward basic residues. Residues 403–416 (TVPQGDSRSYSQEG) show a composition bias toward polar residues. Basic and acidic residues-rich tracts occupy residues 495-505 (CKPEEGPERPQ), 557-567 (CKPEEGPERPQ), and 636-646 (SRSHGVRESPK). The segment at 677–706 (VPVNWKCPWCKAINFSWRTACYKCKKACVP) adopts a RanBP2-type zinc-finger fold.

This sequence belongs to the TEX13 family.

This Homo sapiens (Human) protein is Testis-expressed protein 13D.